The primary structure comprises 615 residues: Aspartokinase (615 aa).

Disordered stretches follow at residues 84-105 (ALQPAMSSSGDGRSGSMSGTAT) and 127-171 (SSVS…SISQ). 2 stretches are compositionally biased toward low complexity: residues 90–102 (SSSGDGRSGSMSG) and 127–164 (SSVSSLSQLESQLGRSGSPSPFQSSSSRSPPRSPATPS). Residues 467 to 537 (IHSNRKTLSH…EVTVSKDMAI (71 aa)) form the ACT domain.

The protein belongs to the aspartokinase family.

It carries out the reaction L-aspartate + ATP = 4-phospho-L-aspartate + ADP. It participates in amino-acid biosynthesis; L-methionine biosynthesis via de novo pathway; L-homoserine from L-aspartate: step 1/3. It functions in the pathway amino-acid biosynthesis; L-threonine biosynthesis; L-threonine from L-aspartate: step 1/5. Phosphorylates aspartate, the first step in the biosynthesis of amino acids that derive from aspartate (the aspartate family of amino acids), including methioinine and threonine, the latter of which is a precursor to isoleucine. The polypeptide is Aspartokinase (Cryptococcus neoformans var. grubii serotype A (strain H99 / ATCC 208821 / CBS 10515 / FGSC 9487) (Filobasidiella neoformans var. grubii)).